A 99-amino-acid polypeptide reads, in one-letter code: Large ribosomal subunit protein bL27 (99 aa).

Residues 1–10 constitute a propeptide that is removed on maturation; it reads MKLIFDIQLF.

It belongs to the bacterial ribosomal protein bL27 family. In terms of processing, the N-terminus is cleaved by ribosomal processing cysteine protease Prp.

The chain is Large ribosomal subunit protein bL27 from Caldicellulosiruptor saccharolyticus (strain ATCC 43494 / DSM 8903 / Tp8T 6331).